The following is a 275-amino-acid chain: Putative ribonuclease-like protein YfkH (275 aa).

6 consecutive transmembrane segments (helical) span residues Leu23–Ala43, Leu83–Val103, Ile126–Gly146, Trp172–Asn192, Phe199–Ser219, and Ile235–Gly255.

Its subcellular location is the cell membrane. The sequence is that of Putative ribonuclease-like protein YfkH (yfkH) from Bacillus subtilis (strain 168).